A 404-amino-acid chain; its full sequence is WD repeat and SOCS box-containing protein 2 (404 aa).

WD repeat units lie at residues 105 to 148 (PPSR…LLLN), 151 to 191 (GHQD…KQIQ), 195 to 234 (GHLQ…LIRK), 237 to 276 (GHQS…RLRS), and 291 to 330 (VHMS…PVAF). The SOCS box domain maps to 356–404 (HVQFWTAPRVLSSLKHLCRKALRSFLTTYQVLALPIPKKMKEFLTYRTF).

Its pathway is protein modification; protein ubiquitination. Functionally, may be a substrate-recognition component of a SCF-like ECS (Elongin-Cullin-SOCS-box protein) E3 ubiquitin ligase complex which mediates the ubiquitination and subsequent proteasomal degradation of target proteins. The sequence is that of WD repeat and SOCS box-containing protein 2 (Wsb2) from Mus musculus (Mouse).